We begin with the raw amino-acid sequence, 186 residues long: Peptidyl-tRNA hydrolase (186 aa).

Tyrosine 14 is a binding site for tRNA. The Proton acceptor role is filled by histidine 19. Residues tyrosine 61, asparagine 63, and asparagine 107 each contribute to the tRNA site.

This sequence belongs to the PTH family. As to quaternary structure, monomer.

Its subcellular location is the cytoplasm. The enzyme catalyses an N-acyl-L-alpha-aminoacyl-tRNA + H2O = an N-acyl-L-amino acid + a tRNA + H(+). Functionally, hydrolyzes ribosome-free peptidyl-tRNAs (with 1 or more amino acids incorporated), which drop off the ribosome during protein synthesis, or as a result of ribosome stalling. Catalyzes the release of premature peptidyl moieties from peptidyl-tRNA molecules trapped in stalled 50S ribosomal subunits, and thus maintains levels of free tRNAs and 50S ribosomes. The polypeptide is Peptidyl-tRNA hydrolase (Helicobacter pylori (strain P12)).